Here is a 341-residue protein sequence, read N- to C-terminus: L-threonine 3-dehydrogenase (341 aa).

Residue cysteine 38 coordinates Zn(2+). Residues threonine 40 and histidine 43 each act as charge relay system in the active site. Zn(2+)-binding residues include histidine 63, glutamate 64, cysteine 93, cysteine 96, cysteine 99, and cysteine 107. NAD(+) is bound by residues isoleucine 175, aspartate 195, arginine 200, 262–264 (LGI), and 286–287 (IY).

This sequence belongs to the zinc-containing alcohol dehydrogenase family. In terms of assembly, homotetramer. Requires Zn(2+) as cofactor.

The protein localises to the cytoplasm. The catalysed reaction is L-threonine + NAD(+) = (2S)-2-amino-3-oxobutanoate + NADH + H(+). Its pathway is amino-acid degradation; L-threonine degradation via oxydo-reductase pathway; glycine from L-threonine: step 1/2. In terms of biological role, catalyzes the NAD(+)-dependent oxidation of L-threonine to 2-amino-3-ketobutyrate. This chain is L-threonine 3-dehydrogenase, found in Shewanella oneidensis (strain ATCC 700550 / JCM 31522 / CIP 106686 / LMG 19005 / NCIMB 14063 / MR-1).